The primary structure comprises 102 residues: NADH-quinone oxidoreductase subunit K (102 aa).

The next 3 membrane-spanning stretches (helical) occupy residues 6–26 (MEHG…GLLI), 30–50 (LLFI…AFVV), and 65–85 (ILVI…LLLL).

This sequence belongs to the complex I subunit 4L family. As to quaternary structure, NDH-1 is composed of 14 different subunits. Subunits NuoA, H, J, K, L, M, N constitute the membrane sector of the complex.

The protein localises to the cell inner membrane. The enzyme catalyses a quinone + NADH + 5 H(+)(in) = a quinol + NAD(+) + 4 H(+)(out). Functionally, NDH-1 shuttles electrons from NADH, via FMN and iron-sulfur (Fe-S) centers, to quinones in the respiratory chain. The immediate electron acceptor for the enzyme in this species is believed to be ubiquinone. Couples the redox reaction to proton translocation (for every two electrons transferred, four hydrogen ions are translocated across the cytoplasmic membrane), and thus conserves the redox energy in a proton gradient. This is NADH-quinone oxidoreductase subunit K from Aeromonas hydrophila subsp. hydrophila (strain ATCC 7966 / DSM 30187 / BCRC 13018 / CCUG 14551 / JCM 1027 / KCTC 2358 / NCIMB 9240 / NCTC 8049).